The primary structure comprises 545 residues: CTP synthase (545 aa).

An amidoligase domain region spans residues 1 to 266 (MTTKYIFVTG…DEICVKRFGL (266 aa)). Serine 14 is a CTP binding site. A UTP-binding site is contributed by serine 14. ATP-binding positions include 15–20 (SLGKGI) and aspartate 72. Positions 72 and 140 each coordinate Mg(2+). CTP-binding positions include 147 to 149 (DIE), 187 to 192 (KTKPTQ), and lysine 223. Residues 187-192 (KTKPTQ) and lysine 223 contribute to the UTP site. Residue 239-241 (RDV) coordinates ATP. The Glutamine amidotransferase type-1 domain occupies 291–542 (IIGMVGKYTE…IKSAIDHQQG (252 aa)). Glycine 352 is a binding site for L-glutamine. The active-site Nucleophile; for glutamine hydrolysis is cysteine 379. L-glutamine is bound by residues 380 to 383 (LGMQ), glutamate 403, and arginine 470. Residues histidine 515 and glutamate 517 contribute to the active site.

It belongs to the CTP synthase family. As to quaternary structure, homotetramer.

The catalysed reaction is UTP + L-glutamine + ATP + H2O = CTP + L-glutamate + ADP + phosphate + 2 H(+). The enzyme catalyses L-glutamine + H2O = L-glutamate + NH4(+). It carries out the reaction UTP + NH4(+) + ATP = CTP + ADP + phosphate + 2 H(+). It participates in pyrimidine metabolism; CTP biosynthesis via de novo pathway; CTP from UDP: step 2/2. With respect to regulation, allosterically activated by GTP, when glutamine is the substrate; GTP has no effect on the reaction when ammonia is the substrate. The allosteric effector GTP functions by stabilizing the protein conformation that binds the tetrahedral intermediate(s) formed during glutamine hydrolysis. Inhibited by the product CTP, via allosteric rather than competitive inhibition. Catalyzes the ATP-dependent amination of UTP to CTP with either L-glutamine or ammonia as the source of nitrogen. Regulates intracellular CTP levels through interactions with the four ribonucleotide triphosphates. In Psychromonas ingrahamii (strain DSM 17664 / CCUG 51855 / 37), this protein is CTP synthase.